Here is a 111-residue protein sequence, read N- to C-terminus: Distal membrane-arm assembly complex protein 1 (111 aa).

Over residues 1–11 the composition is skewed to polar residues; it reads MGSSFSGSTEF. Residues 1–40 form a disordered region; it reads MGSSFSGSTEFSAPAPPTVSTAVPANPPAKSAVPASPARD. The segment covering 18 to 38 has biased composition (low complexity); that stretch reads TVSTAVPANPPAKSAVPASPA. 2 helical membrane-spanning segments follow: residues 51 to 68 and 81 to 101; these read VLSGSTLFGAGTYVYLVA and GTVLQMVIGISIACWGVVVLV.

In terms of assembly, interacts with incompletely assembled mitochondrial NADH:ubiquinone oxidoreductase complex (complex I).

Its subcellular location is the mitochondrion inner membrane. In terms of biological role, required for the assembly of the mitochondrial NADH:ubiquinone oxidoreductase complex (complex I). Involved in the assembly of the distal region of complex I. This is Distal membrane-arm assembly complex protein 1 from Mus musculus (Mouse).